The primary structure comprises 702 residues: Amino-acid racemase (702 aa).

The Cytoplasmic portion of the chain corresponds to 1 to 12 (MKHRANGIDLFR). The chain crosses the membrane as a helical span at residues 13-33 (IFAATMVVAIHTFPFQSIAPF). Residues 34–39 (LDEVIT) lie on the Extracellular side of the membrane. Residues 40–60 (LTVFRVAVPFFFMITGYFLLG) traverse the membrane as a helical segment. Over 61–77 (RLSLNFSYNNNQRVKKY) the chain is Cytoplasmic. Residues 78–98 (LYKIGMIYLYSILLYFPLSLL) traverse the membrane as a helical segment. The Extracellular portion of the chain corresponds to 99-120 (NGTISLKMNILLLLKVFIFDGT). Residues 121–141 (FYHLWYFPASIIGTILVTLLL) form a helical membrane-spanning segment. Residue R142 is a topological domain, cytoplasmic. Residues 143 to 163 (SIGFKLTVAFSTCLYLVGLGG) traverse the membrane as a helical segment. Residues 164 to 191 (DSWYGITNQVPLLNKLYTFIFSWSDYTR) lie on the Extracellular side of the membrane. A helical transmembrane segment spans residues 192–212 (SGVFFTPVFLCLGIFAYRVSK). Topologically, residues 213–218 (KLTASK) are cytoplasmic. The chain crosses the membrane as a helical span at residues 219–239 (ILNLLFYVFIIGMTFESIFLH). Residues 240 to 248 (RFTNVKHDS) lie on the Extracellular side of the membrane. A helical transmembrane segment spans residues 249 to 269 (MYLLLPSCALILFLMLLNWQP). At 270–276 (KLKVKES) the chain is on the cytoplasmic side. The chain crosses the membrane as a helical span at residues 277–297 (ADLTLLVYILHPLVIVIVHSI). Topologically, residues 298-307 (SKYIPILKNS) are extracellular. Residues 308-328 (LLNFLLVVVCSFILAQLLLNL) traverse the membrane as a helical segment. The Cytoplasmic segment spans residues 329–702 (KRKLRVSKQK…LGSRLGTELN (374 aa)). Positions 337-702 (QKIPFERASK…LGSRLGTELN (366 aa)) are racemase. K375 functions as the Proton acceptor in the catalytic mechanism. An N6-(pyridoxal phosphate)lysine modification is found at K375. A substrate-binding site is contributed by R469. Y601 serves as the catalytic Proton acceptor. Substrate is bound at residue M650.

It in the N-terminal section; belongs to the acyltransferase 3 family. This sequence in the C-terminal section; belongs to the alanine racemase family. It depends on pyridoxal 5'-phosphate as a cofactor.

Its subcellular location is the cell membrane. In Enterococcus faecalis (Streptococcus faecalis), this protein is Amino-acid racemase (vanTE).